We begin with the raw amino-acid sequence, 1061 residues long: Chimeric ERCC6-PGBD3 protein (1061 aa).

Residues 1–39 (MPNEGIPHSSQTQEQDCLQSQPVSNNEEMAIKQESGGDG) are disordered. Over residues 8 to 27 (HSSQTQEQDCLQSQPVSNNE) the composition is skewed to polar residues. At serine 158 the chain carries Phosphoserine. A Glycyl lysine isopeptide (Lys-Gly) (interchain with G-Cter in SUMO2) cross-link involves residue lysine 255. Disordered regions lie at residues 287-323 (KQGC…VLSK), 344-466 (GKVG…QRLS), 494-521 (VIQP…INNL), and 537-573 (SDAE…SRRR). Basic and acidic residues predominate over residues 353 to 363 (RPWESDMRPEA). Over residues 364-392 (EGDSEGEESEYFPTEEEEEEEDDEVEGAE) the composition is skewed to acidic residues. Residues serine 429 and serine 430 each carry the phosphoserine modification. The span at 451–462 (RYRDDGDEDYYK) shows a compositional bias: basic and acidic residues. A compositionally biased stretch (acidic residues) spans 506–515 (SDEESGDEEG). Residue serine 554 is modified to Phosphoserine.

In terms of tissue distribution, expressed in heart and oocytes, but not in granulosa cells (at protein level).

The protein localises to the nucleus. Functionally, involved in repair of DNA damage following UV irradiation, acting either in the absence of ERCC6 or synergistically with ERCC6. Involved in the regulation of gene expression. In the absence of ERCC6, induces the expression of genes characteristic of interferon-like antiviral responses. This response is almost completely suppressed in the presence of ERCC6. In the presence of ERCC6, regulates the expression of genes involved in metabolism regulation, including IGFBP5 and IGFBP7. In vitro binds to PGBD3-related transposable elements, called MER85s; these non-autonomous 140 bp elements are characterized by the presence of PGBD3 terminal inverted repeats and the absence of internal transposase ORF. The sequence is that of Chimeric ERCC6-PGBD3 protein from Homo sapiens (Human).